The following is a 1095-amino-acid chain: Actin cross-linking toxin VgrG1 (1095 aa).

The ACD domain maps to 712-1095 (TPDFPTHFPK…TVIQQVESLV (384 aa)). 723-727 (SIGIE) lines the ATP pocket. Mg(2+) contacts are provided by E727 and E789. S792 serves as a coordination point for ATP. Q873 contacts Mg(2+). R979 contacts ATP. E1050 serves as a coordination point for Mg(2+).

It belongs to the VgrG protein family. Interacts with protein VC1417. Mg(2+) serves as cofactor.

The protein resides in the secreted. Its subcellular location is the host cytoplasm. It is found in the host cytosol. Part of the type VI secretion system (T6SS) specialized secretion system, which delivers several virulence factors in both prokaryotic and eukaryotic cells during infection. Forms the spike at the tip of the elongating tube probably formed by hemolysin co-regulated protein/Hcp. Allows the delivery of the TseL antibacterial toxin to target cells where it exerts its toxicity. Also acts directly as an actin-directed toxin that catalyzes the covalent cross-linking of host cytoplasmic monomeric actin. Mediates the cross-link between 'Lys-50' of one monomer and 'Glu-270' of another actin monomer, resulting in formation of highly toxic actin oligomers that cause cell rounding. The toxin can be highly efficient at very low concentrations by acting on formin homology family proteins: toxic actin oligomers bind with high affinity to formins and adversely affect both nucleation and elongation abilities of formins, causing their potent inhibition in both profilin-dependent and independent manners. Acts as an acid--amino-acid ligase that transfers the gamma-phosphoryl group of ATP to the 'Glu-270' actin residue, resulting in the formation of an activated acyl phosphate intermediate. This intermediate is further hydrolyzed and the energy of hydrolysis is utilized for the formation of the amide bond between actin subunits. The sequence is that of Actin cross-linking toxin VgrG1 from Vibrio cholerae serotype O1 (strain ATCC 39541 / Classical Ogawa 395 / O395).